Here is a 376-residue protein sequence, read N- to C-terminus: uncharacterized protein (376 aa).

The signal sequence occupies residues 1 to 28 (MCKPRVWRIAHTIVHVGALLLGTSQLTT). C29 is lipidated: N-palmitoyl cysteine. A lipid anchor (S-diacylglycerol cysteine) is attached at C29.

The protein belongs to the TP013X lipoprotein family.

The protein resides in the cell membrane. This is an uncharacterized protein from Treponema pallidum (strain Nichols).